The following is a 230-amino-acid chain: L-aspartate/glutamate-specific racemase (230 aa).

Substrate contacts are provided by residues methionine 10, glutamine 52, and 83–85; that span reads TNT. Threonine 83 (proton donor) is an active-site residue. The active-site Proton acceptor is cysteine 197. Residue 198 to 199 coordinates substrate; sequence TE.

This sequence belongs to the aspartate/glutamate racemases family. As to quaternary structure, homodimer.

It carries out the reaction L-glutamate = D-glutamate. The enzyme catalyses L-aspartate = D-aspartate. Exhibits racemase activity for both L-glutamate and L-aspartate. The chain is L-aspartate/glutamate-specific racemase from Escherichia coli O157:H7.